We begin with the raw amino-acid sequence, 494 residues long: Alpha-amylase (494 aa).

The N-terminal stretch at 1 to 26 (MQISKAALLASLAALVYAQPVTLFKR) is a signal peptide. Cys-57 and Cys-65 are disulfide-bonded. Position 110 (Trp-110) interacts with substrate. Position 148 (Asn-148) interacts with Ca(2+). Position 149 (His-149) interacts with substrate. Cysteines 177 and 191 form a disulfide. Asp-202 serves as a coordination point for Ca(2+). Asn-224 is a glycosylation site (N-linked (GlcNAc...) asparagine). Arg-231 provides a ligand contact to substrate. 3 residues coordinate Ca(2+): Asp-233, His-237, and Glu-257. The active-site Nucleophile is Asp-233. Residue 236-237 (KH) participates in substrate binding. The active-site Proton donor is the Glu-257. Gly-261 lines the substrate pocket. An intrachain disulfide couples Cys-267 to Cys-310. Positions 324 and 371 each coordinate substrate. A disulfide bond links Cys-462 and Cys-493.

The protein belongs to the glycosyl hydrolase 13 family. The cofactor is Ca(2+).

It localises to the secreted. The enzyme catalyses Endohydrolysis of (1-&gt;4)-alpha-D-glucosidic linkages in polysaccharides containing three or more (1-&gt;4)-alpha-linked D-glucose units.. The chain is Alpha-amylase (ALP1) from Saccharomycopsis fibuligera (Yeast).